A 950-amino-acid chain; its full sequence is Protocadherin alpha-6 (950 aa).

Residues 1 to 29 (MVFTPEDRLGKQCLLLPLLLLAAWKVGSG) form the signal peptide. The Extracellular segment spans residues 30–697 (QLHYSVPEEA…GPEAALVDVN (668 aa)). 6 Cadherin domains span residues 34 to 133 (SVPE…PPLF), 157 to 242 (ASDA…APTF), 243 to 350 (EQSE…VPEI), 351 to 455 (ALTS…APAF), 456 to 565 (AQPE…APAL), and 581 to 678 (VPRS…APKA). 4 N-linked (GlcNAc...) asparagine glycosylation sites follow: Asn-257, Asn-265, Asn-386, and Asn-548. The chain crosses the membrane as a helical span at residues 698–718 (VYLIIAICAVSSLLVLTLLLY). Residues 719–950 (TALRCSAPPT…GNSTTDNSDQ (232 aa)) lie on the Cytoplasmic side of the membrane. PXXP repeat units follow at residues 799–802 (PRQP), 832–835 (PGGP), 873–876 (PGNP), and 891–894 (PGSP). The tract at residues 799–894 (PRQPNPDWRY…PDKFIIPGSP (96 aa)) is 4 X 4 AA repeats of P-X-X-P. Residues 830–950 (AGPGGPDQQW…GNSTTDNSDQ (121 aa)) are disordered. Residues 909-923 (DKSDFITFGKKEETK) show a composition bias toward basic and acidic residues.

Its subcellular location is the cell membrane. The protein localises to the secreted. Potential calcium-dependent cell-adhesion protein. May be involved in the establishment and maintenance of specific neuronal connections in the brain. This Homo sapiens (Human) protein is Protocadherin alpha-6 (PCDHA6).